Consider the following 405-residue polypeptide: Argininosuccinate synthase (405 aa).

Residues Ala10–Ser18 and Ala37 contribute to the ATP site. L-citrulline-binding residues include Tyr88 and Ser93. Gly118 contacts ATP. 3 residues coordinate L-aspartate: Thr120, Asn124, and Asp125. L-citrulline is bound at residue Asn124. Residues Arg128, Ser179, Ser188, Glu264, and Tyr276 each contribute to the L-citrulline site.

It belongs to the argininosuccinate synthase family. Type 1 subfamily. In terms of assembly, homotetramer.

It localises to the cytoplasm. The enzyme catalyses L-citrulline + L-aspartate + ATP = 2-(N(omega)-L-arginino)succinate + AMP + diphosphate + H(+). It participates in amino-acid biosynthesis; L-arginine biosynthesis; L-arginine from L-ornithine and carbamoyl phosphate: step 2/3. The polypeptide is Argininosuccinate synthase (Pseudomonas syringae pv. tomato (strain ATCC BAA-871 / DC3000)).